The sequence spans 221 residues: Histidine biosynthesis bifunctional protein HisIE (221 aa).

The tract at residues 1 to 129 is phosphoribosyl-AMP cyclohydrolase; it reads MAYSKNFSIE…AKKTSPFSNI (129 aa). Residues 130 to 221 are phosphoribosyl-ATP pyrophosphohydrolase; that stretch reads CSELFDTLHE…VLESRRGKNN (92 aa).

The protein in the N-terminal section; belongs to the PRA-CH family. In the C-terminal section; belongs to the PRA-PH family.

The protein resides in the cytoplasm. It carries out the reaction 1-(5-phospho-beta-D-ribosyl)-ATP + H2O = 1-(5-phospho-beta-D-ribosyl)-5'-AMP + diphosphate + H(+). It catalyses the reaction 1-(5-phospho-beta-D-ribosyl)-5'-AMP + H2O = 1-(5-phospho-beta-D-ribosyl)-5-[(5-phospho-beta-D-ribosylamino)methylideneamino]imidazole-4-carboxamide. It participates in amino-acid biosynthesis; L-histidine biosynthesis; L-histidine from 5-phospho-alpha-D-ribose 1-diphosphate: step 2/9. It functions in the pathway amino-acid biosynthesis; L-histidine biosynthesis; L-histidine from 5-phospho-alpha-D-ribose 1-diphosphate: step 3/9. This chain is Histidine biosynthesis bifunctional protein HisIE, found in Prochlorococcus marinus subsp. pastoris (strain CCMP1986 / NIES-2087 / MED4).